A 279-amino-acid chain; its full sequence is Pleckstrin homology domain-containing family F member 1 (279 aa).

One can recognise a PH domain in the interval 35–131 (VLLGEGVLTK…WISHIEECVR (97 aa)). An FYVE-type zinc finger spans residues 152 to 212 (DKATDICMRC…VCSLCYRELA (61 aa)). Residues Cys-158, Cys-161, Cys-175, Cys-178, Cys-183, Cys-186, Cys-204, and Cys-207 each coordinate Zn(2+). A disordered region spans residues 220 to 263 (AREGIGGSPPQLSHLGGTVCGASSGDDDDSDEDREGNGDGDWPT). Residues 244 to 253 (GDDDDSDEDR) show a composition bias toward acidic residues.

In terms of tissue distribution, widely expressed.

The protein localises to the nucleus. It is found in the cytoplasm. Its subcellular location is the perinuclear region. It localises to the lysosome. May induce apoptosis through the lysosomal-mitochondrial pathway. Translocates to the lysosome initiating the permeabilization of lysosomal membrane (LMP) and resulting in the release of CTSD and CTSL to the cytoplasm. Triggers the caspase-independent apoptosis by altering mitochondrial membrane permeabilization (MMP) resulting in the release of PDCD8. The sequence is that of Pleckstrin homology domain-containing family F member 1 (Plekhf1) from Mus musculus (Mouse).